A 267-amino-acid polypeptide reads, in one-letter code: MEKIVAKKKFGQNFLKDESVLQKIIEAMPNNDNKIVEIGPGLGDLTKFLVDVKSVDAFEVDTDLCKVLQNKFEREIATKQLRIHCGDVLTAWKSELIEESYDLVANLPYYIATNIILKALADPKCKNILVMVQLEVAEKFCANDGDKVFGSLSIITQSVGEAHIVVNVPPSAFEPQPKINSAVFLIQKKSDRSDKDFEDMLRVAFTQPRKTLMKNLSSTYDKAMLQEIFEKLSLAQTIRPHQVSTNDYHQLYKLARSLDGTRERTEC.

Positions 13, 15, 39, 59, 87, and 106 each coordinate S-adenosyl-L-methionine.

Belongs to the class I-like SAM-binding methyltransferase superfamily. rRNA adenine N(6)-methyltransferase family. RsmA subfamily.

It localises to the cytoplasm. It carries out the reaction adenosine(1518)/adenosine(1519) in 16S rRNA + 4 S-adenosyl-L-methionine = N(6)-dimethyladenosine(1518)/N(6)-dimethyladenosine(1519) in 16S rRNA + 4 S-adenosyl-L-homocysteine + 4 H(+). Its function is as follows. Specifically dimethylates two adjacent adenosines (A1518 and A1519) in the loop of a conserved hairpin near the 3'-end of 16S rRNA in the 30S particle. May play a critical role in biogenesis of 30S subunits. This chain is Ribosomal RNA small subunit methyltransferase A, found in Sulfurimonas denitrificans (strain ATCC 33889 / DSM 1251) (Thiomicrospira denitrificans (strain ATCC 33889 / DSM 1251)).